Consider the following 195-residue polypeptide: Probable GTP-binding protein EngB (195 aa).

The EngB-type G domain occupies 22–195 (GLPEIALAGR…WGAIKKMINR (174 aa)). GTP contacts are provided by residues 30–37 (GRSNVGKS), 57–61 (GKTQT), 75–78 (DVPG), 142–145 (TKAD), and 174–176 (FSS). Residues Ser-37 and Thr-59 each contribute to the Mg(2+) site.

The protein belongs to the TRAFAC class TrmE-Era-EngA-EngB-Septin-like GTPase superfamily. EngB GTPase family. Mg(2+) serves as cofactor.

In terms of biological role, necessary for normal cell division and for the maintenance of normal septation. Functionally, binds GTP and GDP. The protein is Probable GTP-binding protein EngB of Bacillus subtilis (strain 168).